Here is a 438-residue protein sequence, read N- to C-terminus: Adenosylhomocysteinase (438 aa).

Substrate is bound by residues threonine 61, aspartate 137, and glutamate 162. Position 163–165 (163–165) interacts with NAD(+); sequence TTT. Positions 192 and 196 each coordinate substrate. NAD(+) contacts are provided by residues asparagine 197, 226–231, glutamate 249, asparagine 284, 305–307, and asparagine 352; these read GYGDVG and IGH.

This sequence belongs to the adenosylhomocysteinase family. NAD(+) is required as a cofactor.

It is found in the cytoplasm. The enzyme catalyses S-adenosyl-L-homocysteine + H2O = L-homocysteine + adenosine. The protein operates within amino-acid biosynthesis; L-homocysteine biosynthesis; L-homocysteine from S-adenosyl-L-homocysteine: step 1/1. In terms of biological role, may play a key role in the regulation of the intracellular concentration of adenosylhomocysteine. This Flavobacterium johnsoniae (strain ATCC 17061 / DSM 2064 / JCM 8514 / BCRC 14874 / CCUG 350202 / NBRC 14942 / NCIMB 11054 / UW101) (Cytophaga johnsonae) protein is Adenosylhomocysteinase.